Reading from the N-terminus, the 195-residue chain is Glucagon family neuropeptides (195 aa).

The signal sequence occupies residues 1 to 20; that stretch reads MAKSSRATLALLIYGILMRY. A propeptide spanning residues 21–82 is cleaved from the precursor; the sequence is SQCTPIGMGF…YYPPERRAET (62 aa). Residues 113–132 form a disordered region; it reads VGEEEEDEEDSEPLSKRHSD. The span at 115–124 shows a compositional bias: acidic residues; sequence EEEEDEEDSE. Lys167 carries the post-translational modification Lysine amide. Residues 171–195 constitute a propeptide that is removed on maturation; that stretch reads LVVPSVWTGIRDTVIITPEKRGKRY.

Belongs to the glucagon family. As to expression, brain, testis, ovary and stomach. Not pancreas, pituitary, muscle and liver.

Its subcellular location is the secreted. In terms of biological role, primary role of GHRH is to release GH from the pituitary. PACAP plays pivotal roles as a neurotransmitter and/or a neuromodulator. The sequence is that of Glucagon family neuropeptides from Clarias macrocephalus (Bighead catfish).